The following is a 244-amino-acid chain: Heat shock transcription factor (244 aa).

A DNA-binding region spans residues 13 to 108 (IPKFIMKLYK…LLGFDDSLRM (96 aa)). The tract at residues 123–168 (DGSLKEIVEYLYVQNQELYTELSVCKERIERQERALNGLIEILSRV) is involved in trimerization. The tract at residues 204-244 (EGCEPASPPLQDKGIPELSFKPGGIPHADSDTKDDNYDPFF) is disordered. A compositionally biased stretch (basic and acidic residues) spans 231–244 (ADSDTKDDNYDPFF).

It belongs to the HSF family. In terms of assembly, homotrimer. Homotrimerization increases the affinity of HSF1 to DNA.

Its subcellular location is the nucleus. In terms of biological role, DNA-binding transcription factor that specifically binds heat shock promoter elements (HSE) and activates transcription. The sequence is that of Heat shock transcription factor from Encephalitozoon cuniculi (strain GB-M1) (Microsporidian parasite).